Here is a 340-residue protein sequence, read N- to C-terminus: Deubiquitinase SseL (340 aa).

The active site involves His223. Cys285 serves as the catalytic Nucleophile.

It belongs to the peptidase C79 family.

The protein resides in the secreted. Its subcellular location is the host cytoplasm. In terms of biological role, effector proteins function to alter host cell physiology and promote bacterial survival in host tissues. This protease targets the host cell ubiquitin pathway by acting as a deubiquitinase in infected host cells. This chain is Deubiquitinase SseL (sseL), found in Salmonella paratyphi A (strain ATCC 9150 / SARB42).